The primary structure comprises 263 residues: MDGKVQVLDFIKINPAGNITILIDNFDIYDKNIPKLSEEIMKETNLYAEQVGFIKEKHLQMMGGEFCGNASRSFASLLAFRDKDFSEQKNYSITCSGESEVLDVDVRTDGAKNKFLAKIKMPKFISLEEISIDEYKLGLVRFSGISHFIFNIKENKETSFENIIDLVKKYLSNEDYSAFGIMFFDKDNLSMKPYVYVKELESGIYENSCASGTTALGYYLKKYKNLDRAKVVQPNGWLEYIIENDEMYIDGPVEIVAEGKVYI.

The active-site Proton acceptor is the Cys-67. The active-site Proton donor is the Cys-209.

Belongs to the histidine racemase family. As to quaternary structure, homodimer.

The enzyme catalyses L-histidine = D-histidine. Its function is as follows. Cofactor-independent isomerase that catalyzes the reversible conversion of L-histidine to D-histidine. May play a role in growth of F.nucleatum. The chain is Histidine racemase from Fusobacterium nucleatum subsp. nucleatum (strain ATCC 23726 / VPI 4351).